A 135-amino-acid chain; its full sequence is Large ribosomal subunit protein uL16c (135 aa).

It belongs to the universal ribosomal protein uL16 family. Part of the 50S ribosomal subunit.

The protein resides in the plastid. The protein localises to the chloroplast. The protein is Large ribosomal subunit protein uL16c of Gossypium barbadense (Sea Island cotton).